The chain runs to 1080 residues: Carbamoyl phosphate synthase large chain (1080 aa).

The carboxyphosphate synthetic domain stretch occupies residues 1–403 (MPKRTDLETI…SLQKALRGLE (403 aa)). ATP contacts are provided by Arg-129, Arg-169, Gly-175, Gly-176, Glu-208, Val-210, Glu-215, Gly-241, Val-242, His-243, Gln-285, and Glu-299. One can recognise an ATP-grasp 1 domain in the interval 133-328 (RVAMGEIGLD…IAKVAAKLAV (196 aa)). Mg(2+) is bound by residues Gln-285, Glu-299, and Asn-301. Mn(2+) contacts are provided by Gln-285, Glu-299, and Asn-301. The segment at 404 to 554 (TGKIGLDPTG…YSTYEDECEA (151 aa)) is oligomerization domain. The segment at 555 to 942 (LPTDRDKIMI…AFARAQEAGG (388 aa)) is carbamoyl phosphate synthetic domain. One can recognise an ATP-grasp 2 domain in the interval 679–876 (QQLVDKLGLK…LAKIAARCMA (198 aa)). Residues Arg-715, Arg-754, Leu-756, Glu-761, Gly-787, Val-788, His-789, Ser-790, Gln-830, and Glu-847 each contribute to the ATP site. 3 residues coordinate Mg(2+): Gln-830, Glu-847, and Asn-849. 3 residues coordinate Mn(2+): Gln-830, Glu-847, and Asn-849. An MGS-like domain is found at 943–1080 (IKAPPLGKAF…LQELHKELEA (138 aa)). Residues 943 to 1080 (IKAPPLGKAF…LQELHKELEA (138 aa)) are allosteric domain.

This sequence belongs to the CarB family. As to quaternary structure, composed of two chains; the small (or glutamine) chain promotes the hydrolysis of glutamine to ammonia, which is used by the large (or ammonia) chain to synthesize carbamoyl phosphate. Tetramer of heterodimers (alpha,beta)4. Mg(2+) is required as a cofactor. Mn(2+) serves as cofactor.

The enzyme catalyses hydrogencarbonate + L-glutamine + 2 ATP + H2O = carbamoyl phosphate + L-glutamate + 2 ADP + phosphate + 2 H(+). It carries out the reaction hydrogencarbonate + NH4(+) + 2 ATP = carbamoyl phosphate + 2 ADP + phosphate + 2 H(+). It participates in amino-acid biosynthesis; L-arginine biosynthesis; carbamoyl phosphate from bicarbonate: step 1/1. The protein operates within pyrimidine metabolism; UMP biosynthesis via de novo pathway; (S)-dihydroorotate from bicarbonate: step 1/3. In terms of biological role, large subunit of the glutamine-dependent carbamoyl phosphate synthetase (CPSase). CPSase catalyzes the formation of carbamoyl phosphate from the ammonia moiety of glutamine, carbonate, and phosphate donated by ATP, constituting the first step of 2 biosynthetic pathways, one leading to arginine and/or urea and the other to pyrimidine nucleotides. The large subunit (synthetase) binds the substrates ammonia (free or transferred from glutamine from the small subunit), hydrogencarbonate and ATP and carries out an ATP-coupled ligase reaction, activating hydrogencarbonate by forming carboxy phosphate which reacts with ammonia to form carbamoyl phosphate. This Xanthomonas axonopodis pv. citri (strain 306) protein is Carbamoyl phosphate synthase large chain.